A 304-amino-acid chain; its full sequence is Protein Largen (304 aa).

Residues 1-13 (MSAKSKGNPSSSC) show a composition bias toward polar residues. 4 disordered regions span residues 1 to 27 (MSAKSKGNPSSSCPAEGPPAASKTKVK), 66 to 91 (QLEDEMTDSSKTDTLNSSSSGTTASS), 114 to 160 (LTVL…GGLP), and 239 to 304 (HPPG…TTTV). Residues 33-70 (IVEDLELVLGDLKDVAKELKEVVDQIDTLTSDLQLEDE) are a coiled coil. Residues 77-91 (TDTLNSSSSGTTASS) are compositionally biased toward low complexity. 3 stretches are compositionally biased toward pro residues: residues 120-129 (PNPPPPPPRL), 239-261 (HPPGKIPHQGPPLPPTPHLPPFP), and 277-289 (PIRPATVPPPTAP).

In terms of biological role, regulator of cell size that promotes cell size increase independently of mTOR and Hippo signaling pathways. Acts by stimulating the translation of specific mRNAs, including those encoding proteins affecting mitochondrial functions. Increases mitochondrial mass and respiration. The polypeptide is Protein Largen (PRR16) (Homo sapiens (Human)).